A 1484-amino-acid chain; its full sequence is Chromosome partition protein MukB (1484 aa).

34–41 (GGNGAGKS) contacts ATP. Coiled-coil stretches lie at residues 338 to 415 (NLVQ…RAIQ), 496 to 604 (QTAR…ALAW), 781 to 805 (AARESRLENLSAERDVLAERYATLS), 835 to 868 (EAEMRTLNGRRGELERELSDHHGQNQQSRQHYDQ), 903 to 1115 (HDAQ…SAKA), and 1206 to 1265 (DDPV…LQAV). Positions 666-783 (PGGTDDARLT…AVPLFGRAAR (118 aa)) are flexible hinge.

This sequence belongs to the SMC family. MukB subfamily. Homodimerization via its hinge domain. Binds to DNA via its C-terminal region. Interacts, and probably forms a ternary complex, with MukE and MukF via its C-terminal region. The complex formation is stimulated by calcium or magnesium. Interacts with tubulin-related protein FtsZ.

Its subcellular location is the cytoplasm. The protein localises to the nucleoid. In terms of biological role, plays a central role in chromosome condensation, segregation and cell cycle progression. Functions as a homodimer, which is essential for chromosome partition. Involved in negative DNA supercoiling in vivo, and by this means organize and compact chromosomes. May achieve or facilitate chromosome segregation by condensation DNA from both sides of a centrally located replisome during cell division. The polypeptide is Chromosome partition protein MukB (Sodalis glossinidius (strain morsitans)).